The primary structure comprises 241 residues: Transforming protein p29 (241 aa).

The disordered stretch occupies residues 1 to 41 (MPAARAAPAADEPMRDPVAPVRAPALPRPAPGAVAPASGGA). 2 S-palmitoyl cysteine; by host lipidation sites follow: Cys-233 and Cys-236. Cys-238 is subject to Cysteine methyl ester; by host. Cys-238 carries S-farnesyl cysteine; by host lipidation. The propeptide at 239-241 (VLS) is removed in mature form.

Belongs to the small GTPase superfamily. Ras family.

The protein localises to the host cell membrane. It carries out the reaction GTP + H2O = GDP + phosphate + H(+). With respect to regulation, alternates between an inactive form bound to GDP and an active form bound to GTP. Activated by a guanine nucleotide-exchange factor (GEF) and inactivated by a GTPase-activating protein (GAP). This Mus musculus (Mouse) protein is Transforming protein p29 (H-RAS).